Here is a 668-residue protein sequence, read N- to C-terminus: DNA ligase (668 aa).

NAD(+) is bound by residues 34 to 38 (DAEYD), 83 to 84 (SL), and glutamate 113. The active-site N6-AMP-lysine intermediate is the lysine 115. The NAD(+) site is built by arginine 136, glutamate 170, lysine 286, and lysine 310. The Zn(2+) site is built by cysteine 404, cysteine 407, cysteine 422, and cysteine 427. Residues 590–668 (DSDSYFAGKT…EEQLMGELKK (79 aa)) enclose the BRCT domain.

It belongs to the NAD-dependent DNA ligase family. LigA subfamily. It depends on Mg(2+) as a cofactor. Mn(2+) is required as a cofactor.

The enzyme catalyses NAD(+) + (deoxyribonucleotide)n-3'-hydroxyl + 5'-phospho-(deoxyribonucleotide)m = (deoxyribonucleotide)n+m + AMP + beta-nicotinamide D-nucleotide.. In terms of biological role, DNA ligase that catalyzes the formation of phosphodiester linkages between 5'-phosphoryl and 3'-hydroxyl groups in double-stranded DNA using NAD as a coenzyme and as the energy source for the reaction. It is essential for DNA replication and repair of damaged DNA. The chain is DNA ligase from Bacillus subtilis (strain 168).